A 633-amino-acid chain; its full sequence is ATP-dependent RNA helicase mrh4, mitochondrial (633 aa).

The N-terminal 38 residues, Met1–Met38, are a transit peptide targeting the mitochondrion. The tract at residues Met50–Lys115 is disordered. Polar residues predominate over residues Leu52 to Gln63. Positions Arg98–Pro109 are enriched in basic and acidic residues. The short motif at Ser142–Arg175 is the Q motif element. Residues Ser195–Leu407 enclose the Helicase ATP-binding domain. Ala208 to Thr215 lines the ATP pocket. The DEAD box motif lies at Asp354–Asp357. The region spanning Phe458 to Ile633 is the Helicase C-terminal domain.

This sequence belongs to the DEAD box helicase family. MRH4 subfamily.

The protein localises to the mitochondrion. It catalyses the reaction ATP + H2O = ADP + phosphate + H(+). ATP-binding RNA helicase involved in mitochondrial RNA metabolism. Required for maintenance of mitochondrial DNA. The protein is ATP-dependent RNA helicase mrh4, mitochondrial (mrh4) of Aspergillus niger (strain ATCC MYA-4892 / CBS 513.88 / FGSC A1513).